A 134-amino-acid chain; its full sequence is Waprin-Phi1 (134 aa).

The N-terminal stretch at 1–23 is a signal peptide; the sequence is MTLRRGSCPLLLFSLVGLLTTCA. WAP domains are found at residues 36 to 82 and 83 to 133; these read VAEK…SCQI and PDEK…TTAR. Disulfide bonds link cysteine 43–cysteine 72, cysteine 55–cysteine 76, cysteine 59–cysteine 71, cysteine 65–cysteine 80, cysteine 90–cysteine 120, cysteine 103–cysteine 124, cysteine 107–cysteine 119, and cysteine 113–cysteine 129.

It belongs to the venom waprin family. Expressed by the venom gland.

The protein localises to the secreted. In terms of biological role, damages membranes of susceptible bacteria. Has no hemolytic activity. Not toxic to mice. Does not inhibit the proteinases elastase and cathepsin G. The polypeptide is Waprin-Phi1 (Philodryas olfersii (Green snake)).